The chain runs to 56 residues: UPF0291 protein Clos_1191 (56 aa).

Belongs to the UPF0291 family.

The protein localises to the cytoplasm. The sequence is that of UPF0291 protein Clos_1191 from Alkaliphilus oremlandii (strain OhILAs) (Clostridium oremlandii (strain OhILAs)).